Reading from the N-terminus, the 360-residue chain is Fructose import permease protein FrcC (360 aa).

A run of 9 helical transmembrane segments spans residues 48–68 (AAVPLIVLVLSLIAFGVILGG), 84–106 (AIVGIVGAAQTLVILTAGIDLSV), 125–145 (GFPPALSVICGLGVGALCGYI), 155–175 (LPPFIVTLGMWQIVLASNFLY), 205–225 (AVFTYGVVVMVLLVCLLWYVL), 254–274 (MLISIYTLSGLICALAGWALI), 284–304 (AGQFANIESITAVVIGGISLF), 310–330 (IMGMLFGALIVGVFSLGLRLM), and 335–355 (QWTYLLIGLLIIIAVAIDQWI).

This sequence belongs to the binding-protein-dependent transport system permease family. As to quaternary structure, the complex is composed of two ATP-binding proteins (FrcA), two transmembrane proteins (FrcC) and a solute-binding protein (FrcB).

It localises to the cell inner membrane. Part of the high-affinity ABC transporter complex FrcBCA involved in fructose uptake. Is also a high-affinity transporter for ribose and mannose. Responsible for the translocation of the substrate across the membrane. The chain is Fructose import permease protein FrcC from Rhizobium meliloti (Ensifer meliloti).